The following is a 141-amino-acid chain: Large ribosomal subunit protein uL11 (141 aa).

This sequence belongs to the universal ribosomal protein uL11 family. In terms of assembly, part of the ribosomal stalk of the 50S ribosomal subunit. Interacts with L10 and the large rRNA to form the base of the stalk. L10 forms an elongated spine to which L12 dimers bind in a sequential fashion forming a multimeric L10(L12)X complex. Post-translationally, one or more lysine residues are methylated.

Its function is as follows. Forms part of the ribosomal stalk which helps the ribosome interact with GTP-bound translation factors. The chain is Large ribosomal subunit protein uL11 from Thermosipho africanus (strain TCF52B).